A 540-amino-acid chain; its full sequence is NADH-quinone oxidoreductase subunit N 1 (540 aa).

The next 13 membrane-spanning stretches (helical) occupy residues 11 to 31, 52 to 72, 109 to 129, 142 to 162, 195 to 215, 250 to 270, 284 to 306, 324 to 344, 352 to 372, 386 to 406, 431 to 451, 464 to 486, and 508 to 528; these read ILPE…DVLT, AVGL…LFTV, FTMI…LLAM, ALLI…EFIL, FLFG…TYGF, LILG…VVPF, PVTA…RLLT, WTSI…LAAL, LLAY…LLWA, LIYY…VLAV, LMMT…GFWA, AVPL…LRFL, and AAII…NLIW.

This sequence belongs to the complex I subunit 2 family. NDH-1 is composed of 14 different subunits. Subunits NuoA, H, J, K, L, M, N constitute the membrane sector of the complex.

It localises to the cell membrane. The enzyme catalyses a quinone + NADH + 5 H(+)(in) = a quinol + NAD(+) + 4 H(+)(out). In terms of biological role, NDH-1 shuttles electrons from NADH, via FMN and iron-sulfur (Fe-S) centers, to quinones in the respiratory chain. The immediate electron acceptor for the enzyme in this species is believed to be ubiquinone. Couples the redox reaction to proton translocation (for every two electrons transferred, four hydrogen ions are translocated across the cytoplasmic membrane), and thus conserves the redox energy in a proton gradient. This chain is NADH-quinone oxidoreductase subunit N 1, found in Roseiflexus castenholzii (strain DSM 13941 / HLO8).